The sequence spans 336 residues: Biotin synthase (336 aa).

Residues 54-281 enclose the Radical SAM core domain; the sequence is NAIQLSTLLS…KAMVRLSAGR (228 aa). Residues C69, C73, and C76 each contribute to the [4Fe-4S] cluster site. Residues C113, C144, C204, and R276 each coordinate [2Fe-2S] cluster.

The protein belongs to the radical SAM superfamily. Biotin synthase family. Homodimer. It depends on [4Fe-4S] cluster as a cofactor. [2Fe-2S] cluster serves as cofactor.

It catalyses the reaction (4R,5S)-dethiobiotin + (sulfur carrier)-SH + 2 reduced [2Fe-2S]-[ferredoxin] + 2 S-adenosyl-L-methionine = (sulfur carrier)-H + biotin + 2 5'-deoxyadenosine + 2 L-methionine + 2 oxidized [2Fe-2S]-[ferredoxin]. Its pathway is cofactor biosynthesis; biotin biosynthesis; biotin from 7,8-diaminononanoate: step 2/2. In terms of biological role, catalyzes the conversion of dethiobiotin (DTB) to biotin by the insertion of a sulfur atom into dethiobiotin via a radical-based mechanism. The sequence is that of Biotin synthase from Burkholderia thailandensis (strain ATCC 700388 / DSM 13276 / CCUG 48851 / CIP 106301 / E264).